Reading from the N-terminus, the 294-residue chain is Probable 2-(5''-triphosphoribosyl)-3'-dephosphocoenzyme-A synthase (294 aa).

The protein belongs to the CitG/MdcB family.

The catalysed reaction is 3'-dephospho-CoA + ATP = 2'-(5''-triphospho-alpha-D-ribosyl)-3'-dephospho-CoA + adenine. The polypeptide is Probable 2-(5''-triphosphoribosyl)-3'-dephosphocoenzyme-A synthase (Streptococcus pyogenes serotype M5 (strain Manfredo)).